We begin with the raw amino-acid sequence, 555 residues long: Alpha-copaene synthase (555 aa).

Mg(2+)-binding residues include aspartate 312, aspartate 316, aspartate 452, serine 456, and glutamate 460. The short motif at 312-316 (DDTYD) is the DDXXD motif element.

The protein belongs to the terpene synthase family. It depends on Mg(2+) as a cofactor. Mainly expressed in sunflower trichomes.

The catalysed reaction is (2E,6E)-farnesyl diphosphate = alpha-copaene + diphosphate. The enzyme catalyses (2E,6E)-farnesyl diphosphate = alpha-muurolene + diphosphate. It carries out the reaction (2E,6E)-farnesyl diphosphate = alpha-humulene + diphosphate. It participates in secondary metabolite biosynthesis; terpenoid biosynthesis. Its function is as follows. Involved in the biosynthesis of germacrene-derived sesquiterpene lactones. Catalyzes the cyclization of farnesyl diphosphate to alpha-copaene, delta-cadinene, alpha-muurolene, beta-caryophyllene and alpha-humulene. This Helianthus annuus (Common sunflower) protein is Alpha-copaene synthase (CS).